Consider the following 545-residue polypeptide: Cannabidiolic acid synthase-like 1 (545 aa).

The first 28 residues, 1–28, serve as a signal peptide directing secretion; it reads MKCSTFCFWYVCKIIFFFLSFNIQISIA. A disulfide bridge links Cys37 with Cys99. Asn45, Asn65, Asn89, and Asn168 each carry an N-linked (GlcNAc...) asparagine glycan. One can recognise an FAD-binding PCMH-type domain in the interval 77 to 251; the sequence is TTPKPLVIIT…AAWKIRLVAV (175 aa). A cross-link (6-(S-cysteinyl)-8alpha-(pros-histidyl)-FAD (His-Cys)) is located at residues 114–176; the sequence is HDAEGMSYIS…ENLSFPAGYC (63 aa). Substrate is bound at residue His292. N-linked (GlcNAc...) asparagine glycosylation is found at Asn297, Asn305, Asn329, and Asn361. A substrate-binding site is contributed by Tyr417. Asn467 carries N-linked (GlcNAc...) asparagine glycosylation. The active-site Proton acceptor is the Tyr484. A glycan (N-linked (GlcNAc...) asparagine) is linked at Asn499.

This sequence belongs to the oxygen-dependent FAD-linked oxidoreductase family. The cofactor is FAD. Post-translationally, the FAD cofactor is bound via a bicovalent 6-S-cysteinyl, 8alpha-N1-histidyl FAD linkage.

It localises to the secreted. Its function is as follows. Has no cannabidiolic acid synthase activity. The protein is Cannabidiolic acid synthase-like 1 (CBDAS2) of Cannabis sativa (Hemp).